Here is a 102-residue protein sequence, read N- to C-terminus: Small ribosomal subunit protein uS10 (102 aa).

The protein belongs to the universal ribosomal protein uS10 family. Part of the 30S ribosomal subunit.

Its function is as follows. Involved in the binding of tRNA to the ribosomes. The chain is Small ribosomal subunit protein uS10 from Dehalococcoides mccartyi (strain ATCC BAA-2100 / JCM 16839 / KCTC 5957 / BAV1).